The primary structure comprises 308 residues: Eugenol synthase 1 (308 aa).

NADP(+)-binding positions include 13 to 16 (TGYI), 35 to 45 (VRESTVSDPAK), Arg36, 86 to 88 (QMQ), 111 to 113 (SEF), Lys133, and 153 to 155 (NCF). Lys133 (proton donor/acceptor) is an active-site residue.

Belongs to the NmrA-type oxidoreductase family. As to expression, in flowers, mostly expressed in limbs, and, to a lower extent, in tubes.

It carries out the reaction eugenol + a carboxylate + NADP(+) = a coniferyl ester + NADPH. The enzyme catalyses eugenol + acetate + NADP(+) = (E)-coniferyl acetate + NADPH. Its pathway is aromatic compound metabolism; phenylpropanoid biosynthesis. In terms of biological role, involved in the biosynthesis of the floral volatile eugenol. Catalyzes the synthesis of the phenylpropene eugenol from coniferyl acetate. Phenylpropenes are produced by plants as defense compounds with antimicrobial and antianimal properties, or as floral attractants of pollinators. The protein is Eugenol synthase 1 of Petunia hybrida (Petunia).